The chain runs to 117 residues: DNA-binding protein MK1619 (117 aa).

This sequence belongs to the PDCD5 family.

This Methanopyrus kandleri (strain AV19 / DSM 6324 / JCM 9639 / NBRC 100938) protein is DNA-binding protein MK1619.